A 579-amino-acid polypeptide reads, in one-letter code: Arginine--tRNA ligase (579 aa).

The 'HIGH' region signature appears at 127–137 (PNLAKEMHVGH).

It belongs to the class-I aminoacyl-tRNA synthetase family. As to quaternary structure, monomer.

The protein resides in the cytoplasm. The enzyme catalyses tRNA(Arg) + L-arginine + ATP = L-arginyl-tRNA(Arg) + AMP + diphosphate. This Ectopseudomonas mendocina (strain ymp) (Pseudomonas mendocina) protein is Arginine--tRNA ligase.